A 1949-amino-acid polypeptide reads, in one-letter code: Protein GREB1 (1949 aa).

Disordered regions lie at residues 52 to 77 (EGGS…GPPN), 302 to 334 (ILSN…GGGN), and 1085 to 1210 (EALE…GQRS). Positions 59–68 (NEEEEEEGEG) are enriched in acidic residues. Composition is skewed to basic and acidic residues over residues 1085–1095 (EALESDAEKLS) and 1110–1126 (TSEK…RSHD). The span at 1127–1147 (SASSSLSSKASGSALGGESSA) shows a compositional bias: low complexity. The span at 1166-1178 (PAEEGRAPGEKQR) shows a compositional bias: basic and acidic residues. A helical transmembrane segment spans residues 1868 to 1888 (DLLFSGLLLYLCDSFVGASFL).

The protein belongs to the GREB1 family. In terms of tissue distribution, expressed in proliferating prostatic tissue and prostate cancer.

It localises to the membrane. In terms of biological role, may play a role in estrogen-stimulated cell proliferation. Acts as a regulator of hormone-dependent cancer growth in breast and prostate cancers. This chain is Protein GREB1 (GREB1), found in Homo sapiens (Human).